A 379-amino-acid polypeptide reads, in one-letter code: Cysteine-rich receptor-like protein kinase 44 (379 aa).

Residues Phe56–Thr336 form the Protein kinase domain. Residues Leu62–Val70 and Lys84 contribute to the ATP site. Residue Tyr129 is modified to Phosphotyrosine. Asp181 acts as the Proton acceptor in catalysis. Ser185 bears the Phosphoserine mark. Thr223 carries the phosphothreonine modification. A Phosphotyrosine modification is found at Tyr231.

This sequence belongs to the protein kinase superfamily. Ser/Thr protein kinase family. CRK subfamily.

It catalyses the reaction L-seryl-[protein] + ATP = O-phospho-L-seryl-[protein] + ADP + H(+). The enzyme catalyses L-threonyl-[protein] + ATP = O-phospho-L-threonyl-[protein] + ADP + H(+). The sequence is that of Cysteine-rich receptor-like protein kinase 44 from Arabidopsis thaliana (Mouse-ear cress).